A 151-amino-acid chain; its full sequence is SsrA-binding protein (151 aa).

The protein belongs to the SmpB family.

It is found in the cytoplasm. In terms of biological role, required for rescue of stalled ribosomes mediated by trans-translation. Binds to transfer-messenger RNA (tmRNA), required for stable association of tmRNA with ribosomes. tmRNA and SmpB together mimic tRNA shape, replacing the anticodon stem-loop with SmpB. tmRNA is encoded by the ssrA gene; the 2 termini fold to resemble tRNA(Ala) and it encodes a 'tag peptide', a short internal open reading frame. During trans-translation Ala-aminoacylated tmRNA acts like a tRNA, entering the A-site of stalled ribosomes, displacing the stalled mRNA. The ribosome then switches to translate the ORF on the tmRNA; the nascent peptide is terminated with the 'tag peptide' encoded by the tmRNA and targeted for degradation. The ribosome is freed to recommence translation, which seems to be the essential function of trans-translation. This is SsrA-binding protein from Lactobacillus acidophilus (strain ATCC 700396 / NCK56 / N2 / NCFM).